The primary structure comprises 192 residues: Probable GTP-binding protein EngB (192 aa).

Residues 22–192 (GRPEIVFVGR…LLASIDTFTQ (171 aa)) enclose the EngB-type G domain. Residues 30–37 (GRSNVGKS), 57–61 (GKTRL), 75–78 (DLPG), 142–145 (TKWD), and 172–174 (YSS) contribute to the GTP site. Mg(2+)-binding residues include serine 37 and threonine 59.

The protein belongs to the TRAFAC class TrmE-Era-EngA-EngB-Septin-like GTPase superfamily. EngB GTPase family. Requires Mg(2+) as cofactor.

Necessary for normal cell division and for the maintenance of normal septation. The protein is Probable GTP-binding protein EngB of Chlorobaculum tepidum (strain ATCC 49652 / DSM 12025 / NBRC 103806 / TLS) (Chlorobium tepidum).